The following is a 124-amino-acid chain: Small ribosomal subunit protein uS12c (124 aa).

The interval 1–28 is disordered; sequence MPTFQQLVRSARKPHAKKTKSPALQGCP. Positions 10–20 are enriched in basic residues; the sequence is SARKPHAKKTK.

This sequence belongs to the universal ribosomal protein uS12 family. As to quaternary structure, part of the 30S ribosomal subunit.

It is found in the plastid. With S4 and S5 plays an important role in translational accuracy. Located at the interface of the 30S and 50S subunits. In Prototheca wickerhamii, this protein is Small ribosomal subunit protein uS12c (rps12).